The sequence spans 287 residues: 4-hydroxybenzoate octaprenyltransferase (287 aa).

Helical transmembrane passes span 20–40 (IGSL…ADGL), 43–63 (MHVL…GCVI), 94–114 (LGLF…MNTL), 115–135 (TIML…MKRY), 137–157 (HLPQ…AYAA), 159–179 (AGEL…WTIA), 210–230 (IIIG…GHSL), 235–255 (IYYW…RLIG), and 266–286 (FLNN…SVMM).

This sequence belongs to the UbiA prenyltransferase family. Requires Mg(2+) as cofactor.

The protein resides in the cell inner membrane. The catalysed reaction is all-trans-octaprenyl diphosphate + 4-hydroxybenzoate = 4-hydroxy-3-(all-trans-octaprenyl)benzoate + diphosphate. It participates in cofactor biosynthesis; ubiquinone biosynthesis. Functionally, catalyzes the prenylation of para-hydroxybenzoate (PHB) with an all-trans polyprenyl group. Mediates the second step in the final reaction sequence of ubiquinone-8 (UQ-8) biosynthesis, which is the condensation of the polyisoprenoid side chain with PHB, generating the first membrane-bound Q intermediate 3-octaprenyl-4-hydroxybenzoate. In Photobacterium profundum (strain SS9), this protein is 4-hydroxybenzoate octaprenyltransferase.